Here is a 1040-residue protein sequence, read N- to C-terminus: Multidrug resistance protein MdtB (1040 aa).

11 helical membrane passes run 15-37 (LFIL…GIIG), 343-365 (VQFE…LRNA), 369-391 (LIPS…FLGF), 398-420 (LMAL…ENIA), 440-462 (IGFT…LFMG), 474-496 (VTLA…MMCA), 535-557 (HPWL…YIWI), 867-889 (VWLI…ESFI), 909-931 (LMMA…IGIV), 968-990 (ILMT…GVGA), and 1000-1022 (MVGG…YLLF).

The protein belongs to the resistance-nodulation-cell division (RND) (TC 2.A.6) family. MdtB subfamily. Part of a tripartite efflux system composed of MdtA, MdtB and MdtC. MdtB forms a heteromultimer with MdtC.

Its subcellular location is the cell inner membrane. This is Multidrug resistance protein MdtB from Pectobacterium atrosepticum (strain SCRI 1043 / ATCC BAA-672) (Erwinia carotovora subsp. atroseptica).